The primary structure comprises 984 residues: Translation initiation factor IF-2 (984 aa).

Residues 32-402 are disordered; sequence PAKNATSTLT…TQPQRAAKRK (371 aa). Residues 89 to 123 show a composition bias toward low complexity; sequence PAETEAQASPAQPEAKAAAPAAEAEEAPAAKPAPA. Basic and acidic residues predominate over residues 126 to 136; sequence RKAEARTEAPR. Composition is skewed to low complexity over residues 154 to 172 and 187 to 197; these read APET…SAAP and AETTESAPAEP. Residues 198-220 are compositionally biased toward basic and acidic residues; that stretch reads AAEKAPAEKRRYEVSMEPEKDSV. Over residues 255–270 the composition is skewed to low complexity; it reads RPDPAAVQAQAAAAAQ. The span at 271–283 shows a compositional bias: basic and acidic residues; that stretch reads AREERAERPDRGP. Over residues 308–334 the composition is skewed to low complexity; sequence GRPAPRSGAPRPGGARPAAGFGQPAQA. Positions 482-651 constitute a tr-type G domain; that stretch reads PRPPVVTIMG…ALQAEVLELK (170 aa). Residues 491–498 are G1; that stretch reads GHVDHGKT. 491 to 498 contributes to the GTP binding site; the sequence is GHVDHGKT. A G2 region spans residues 516-520; that stretch reads GITQH. The interval 537–540 is G3; sequence DTPG. Residues 537–541 and 591–594 each bind GTP; these read DTPGH and NKID. A G4 region spans residues 591–594; sequence NKID. The G5 stretch occupies residues 627 to 629; it reads SAK.

Belongs to the TRAFAC class translation factor GTPase superfamily. Classic translation factor GTPase family. IF-2 subfamily.

It is found in the cytoplasm. One of the essential components for the initiation of protein synthesis. Protects formylmethionyl-tRNA from spontaneous hydrolysis and promotes its binding to the 30S ribosomal subunits. Also involved in the hydrolysis of GTP during the formation of the 70S ribosomal complex. This chain is Translation initiation factor IF-2, found in Oleidesulfovibrio alaskensis (strain ATCC BAA-1058 / DSM 17464 / G20) (Desulfovibrio alaskensis).